The primary structure comprises 181 residues: CDP-archaeol synthase (181 aa).

5 consecutive transmembrane segments (helical) span residues 7–27 (VVWA…AVLA), 55–75 (LIGT…TPSV), 88–108 (LRAG…ASFL), 126–146 (LDFV…WFTE), and 147–167 (TFTL…HVVT).

Belongs to the CDP-archaeol synthase family. Requires Mg(2+) as cofactor.

The protein resides in the cell membrane. The enzyme catalyses 2,3-bis-O-(geranylgeranyl)-sn-glycerol 1-phosphate + CTP + H(+) = CDP-2,3-bis-O-(geranylgeranyl)-sn-glycerol + diphosphate. It participates in membrane lipid metabolism; glycerophospholipid metabolism. Catalyzes the formation of CDP-2,3-bis-(O-geranylgeranyl)-sn-glycerol (CDP-archaeol) from 2,3-bis-(O-geranylgeranyl)-sn-glycerol 1-phosphate (DGGGP) and CTP. This reaction is the third ether-bond-formation step in the biosynthesis of archaeal membrane lipids. The polypeptide is CDP-archaeol synthase (Haloarcula marismortui (strain ATCC 43049 / DSM 3752 / JCM 8966 / VKM B-1809) (Halobacterium marismortui)).